Reading from the N-terminus, the 251-residue chain is Flap endonuclease Xni (251 aa).

D104 contributes to the Mg(2+) binding site. In terms of domain architecture, 5'-3' exonuclease spans 160–249; it reads VSPGQLADFW…LDGNLQQLRL (90 aa). Residues L171, A172, P180, V182, and I185 each contribute to the K(+) site. The tract at residues 184-189 is interaction with DNA; the sequence is GIGPKS.

Belongs to the Xni family. Requires Mg(2+) as cofactor. The cofactor is K(+).

Functionally, has flap endonuclease activity. During DNA replication, flap endonucleases cleave the 5'-overhanging flap structure that is generated by displacement synthesis when DNA polymerase encounters the 5'-end of a downstream Okazaki fragment. This Cronobacter sakazakii (strain ATCC BAA-894) (Enterobacter sakazakii) protein is Flap endonuclease Xni.